The primary structure comprises 159 residues: Type IV major alpha-pilin (159 aa).

Residues 1 to 6 (MNAQKG) constitute a propeptide, leader sequence. F7 carries the post-translational modification N-methylphenylalanine. The helical transmembrane segment at 7–27 (FTLIELMIVIAIIGILAAIAL) threads the bilayer. The tract at residues 64–87 (VLSEESSTSKENIGLTSSETSTKP) is disordered. Over residues 67–87 (EESSTSKENIGLTSSETSTKP) the composition is skewed to polar residues. A disulfide bond links C137 and C156.

It belongs to the N-Me-Phe pilin family. Major component of the type IV pilus (T4P) that plays a role in surface and attachment to the host epithelial tissues.

It is found in the fimbrium. The protein localises to the membrane. This is Type IV major alpha-pilin (tfpI) from Moraxella bovis.